A 261-amino-acid chain; its full sequence is Acetoacetate decarboxylase 2 (261 aa).

Residue Lys-116 is the Schiff-base intermediate with acetoacetate of the active site.

The protein belongs to the ADC family.

It catalyses the reaction acetoacetate + H(+) = acetone + CO2. Functionally, catalyzes the conversion of acetoacetate to acetone and carbon dioxide. The sequence is that of Acetoacetate decarboxylase 2 from Mesorhizobium japonicum (strain LMG 29417 / CECT 9101 / MAFF 303099) (Mesorhizobium loti (strain MAFF 303099)).